A 662-amino-acid chain; its full sequence is Protein distal antenna (662 aa).

The region spanning 21–72 (TKGKRPLRHLTATDKIDAIQRIHDGESKASVARDIGVPESTLRGWCKNEEKL) is the HTH psq-type domain. The H-T-H motif DNA-binding region spans 48 to 68 (KASVARDIGVPESTLRGWCKN). Disordered regions lie at residues 265–299 (RNAR…STPS), 348–407 (YSQM…PEDT), 491–537 (PEDL…DDEV), and 558–596 (QSSP…KSTC). Residues 349–391 (SQMPRPSSPQQPQSTPPTTTTTQQQQPQSSTPPTATPPIVSTP) show a composition bias toward low complexity. Residues 511 to 520 (FNPSPSTSIK) are compositionally biased toward polar residues. The span at 527-536 (VDEDEDEDDE) shows a compositional bias: acidic residues.

As to quaternary structure, homomers. Interacts with itself, danr, ey and dac to form a complex (or complexes) containing the RD factors.

It localises to the nucleus. Probable transcription factor with a role in the retinal determination (RD) network. Contributes to differentiation of antenna-specific characteristics. This is Protein distal antenna from Culex quinquefasciatus (Southern house mosquito).